We begin with the raw amino-acid sequence, 24 residues long: Coenzyme PQQ synthesis protein A (24 aa).

The pyrroloquinoline quinone (Glu-Tyr) cross-link spans 16–20; the sequence is EVTMY.

The protein belongs to the PqqA family.

Its pathway is cofactor biosynthesis; pyrroloquinoline quinone biosynthesis. In terms of biological role, required for coenzyme pyrroloquinoline quinone (PQQ) biosynthesis. PQQ is probably formed by cross-linking a specific glutamate to a specific tyrosine residue and excising these residues from the peptide. The chain is Coenzyme PQQ synthesis protein A from Pseudomonas syringae pv. syringae (strain B728a).